The chain runs to 277 residues: Undecaprenyl-diphosphatase (277 aa).

The next 6 membrane-spanning stretches (helical) occupy residues 53–73 (LGAILAVVWEFREKVFGVILG), 85–105 (VNLLIAFLPAVVLGVAFADLI), 108–128 (WLFNPITVASALVVGGLVMLW), 183–203 (AATEFSFFLAMPTMVGAAAYS), 215–235 (GDLPVFALGFVVSFIFAMLAV), and 250–270 (FAWYRIGFGLLILLTWQLGVV).

Belongs to the UppP family.

Its subcellular location is the cell inner membrane. The catalysed reaction is di-trans,octa-cis-undecaprenyl diphosphate + H2O = di-trans,octa-cis-undecaprenyl phosphate + phosphate + H(+). Functionally, catalyzes the dephosphorylation of undecaprenyl diphosphate (UPP). Confers resistance to bacitracin. This is Undecaprenyl-diphosphatase from Azotobacter vinelandii (strain DJ / ATCC BAA-1303).